We begin with the raw amino-acid sequence, 233 residues long: DNA-directed RNA polymerase V subunit 5C (233 aa).

The protein belongs to the archaeal Rpo5/eukaryotic RPB5 RNA polymerase subunit family. Component of the RNA polymerase V complex. As to expression, expressed in flower buds and siliques.

It localises to the nucleus. In terms of biological role, DNA-dependent RNA polymerase catalyzes the transcription of DNA into RNA using the four ribonucleoside triphosphates as substrates. Component of RNA polymerase V involved in RNA-directed DNA methylation-dependent (RdDM) silencing of endogenous repeated sequences, including transposable elements. In Arabidopsis thaliana (Mouse-ear cress), this protein is DNA-directed RNA polymerase V subunit 5C (NRPE5C).